Consider the following 296-residue polypeptide: Peroxidase P7 (296 aa).

The residue at position 1 (Q1) is a Pyrrolidone carboxylic acid. 4 cysteine pairs are disulfide-bonded: C11/C91, C44/C49, C97/C292, and C176/C201. H42 functions as the Proton acceptor in the catalytic mechanism. The Ca(2+) site is built by D43, V46, G48, D50, and S52. P139 contacts substrate. Position 169 (H169) interacts with heme b. T170 is a Ca(2+) binding site. N185 carries an N-linked (GlcNAc...) asparagine glycan. Ca(2+)-binding residues include D216, S219, and D224.

The protein belongs to the peroxidase family. Classical plant (class III) peroxidase subfamily. Requires Ca(2+) as cofactor. Heme b is required as a cofactor.

It carries out the reaction 2 a phenolic donor + H2O2 = 2 a phenolic radical donor + 2 H2O. Removal of H(2)O(2), oxidation of toxic reductants, biosynthesis and degradation of lignin, suberization, auxin catabolism, response to environmental stresses such as wounding, pathogen attack and oxidative stress. These functions might be dependent on each isozyme/isoform in each plant tissue. The polypeptide is Peroxidase P7 (Brassica rapa subsp. rapa (Turnip)).